Here is a 312-residue protein sequence, read N- to C-terminus: Acetyl-coenzyme A carboxylase carboxyl transferase subunit alpha (312 aa).

Residues 36-286 (RLDKEVKSIY…KEYFLDALRT (251 aa)) enclose the CoA carboxyltransferase C-terminal domain.

This sequence belongs to the AccA family. In terms of assembly, acetyl-CoA carboxylase is a heterohexamer composed of biotin carboxyl carrier protein (AccB), biotin carboxylase (AccC) and two subunits each of ACCase subunit alpha (AccA) and ACCase subunit beta (AccD).

It is found in the cytoplasm. It catalyses the reaction N(6)-carboxybiotinyl-L-lysyl-[protein] + acetyl-CoA = N(6)-biotinyl-L-lysyl-[protein] + malonyl-CoA. Its pathway is lipid metabolism; malonyl-CoA biosynthesis; malonyl-CoA from acetyl-CoA: step 1/1. Its function is as follows. Component of the acetyl coenzyme A carboxylase (ACC) complex. First, biotin carboxylase catalyzes the carboxylation of biotin on its carrier protein (BCCP) and then the CO(2) group is transferred by the carboxyltransferase to acetyl-CoA to form malonyl-CoA. The protein is Acetyl-coenzyme A carboxylase carboxyl transferase subunit alpha of Helicobacter pylori (strain ATCC 700392 / 26695) (Campylobacter pylori).